A 135-amino-acid polypeptide reads, in one-letter code: UPF0299 membrane protein Spro_1570 (135 aa).

A run of 4 helical transmembrane segments spans residues 4 to 24 (LFTL…CLFA), 30 to 50 (ALLP…FALL), 63 to 83 (GCHL…VGVM), and 93 to 113 (LGPL…VVGY).

Belongs to the UPF0299 family.

Its subcellular location is the cell inner membrane. The chain is UPF0299 membrane protein Spro_1570 from Serratia proteamaculans (strain 568).